The sequence spans 545 residues: CTP synthase (545 aa).

The segment at 1–267 is amidoligase domain; it reads MTKFIFVTGG…AEQTLKLLQM (267 aa). Serine 13 provides a ligand contact to CTP. Position 13 (serine 13) interacts with UTP. Residues 14-19 and aspartate 71 each bind ATP; that span reads SIGKGI. Aspartate 71 and glutamate 141 together coordinate Mg(2+). CTP is bound by residues 148 to 150, 188 to 193, and lysine 224; these read DIE and KTKPTQ. UTP contacts are provided by residues 188-193 and lysine 224; that span reads KTKPTQ. In terms of domain architecture, Glutamine amidotransferase type-1 spans 292–534; the sequence is EIAIVGKYVS…VQAAIAQSHP (243 aa). Glycine 354 contributes to the L-glutamine binding site. The active-site Nucleophile; for glutamine hydrolysis is the cysteine 381. Residues 382–385, glutamate 405, and arginine 462 contribute to the L-glutamine site; that span reads LGMQ. Active-site residues include histidine 507 and glutamate 509.

The protein belongs to the CTP synthase family. Homotetramer.

The catalysed reaction is UTP + L-glutamine + ATP + H2O = CTP + L-glutamate + ADP + phosphate + 2 H(+). It catalyses the reaction L-glutamine + H2O = L-glutamate + NH4(+). The enzyme catalyses UTP + NH4(+) + ATP = CTP + ADP + phosphate + 2 H(+). It functions in the pathway pyrimidine metabolism; CTP biosynthesis via de novo pathway; CTP from UDP: step 2/2. Allosterically activated by GTP, when glutamine is the substrate; GTP has no effect on the reaction when ammonia is the substrate. The allosteric effector GTP functions by stabilizing the protein conformation that binds the tetrahedral intermediate(s) formed during glutamine hydrolysis. Inhibited by the product CTP, via allosteric rather than competitive inhibition. Catalyzes the ATP-dependent amination of UTP to CTP with either L-glutamine or ammonia as the source of nitrogen. Regulates intracellular CTP levels through interactions with the four ribonucleotide triphosphates. The polypeptide is CTP synthase (Trichormus variabilis (strain ATCC 29413 / PCC 7937) (Anabaena variabilis)).